The sequence spans 593 residues: FAD-binding monooxygenase acrE (593 aa).

FAD contacts are provided by residues 61–64 (TWRF), 73–74 (DS), and Tyr79. 71 to 73 (RVD) serves as a coordination point for NADP(+). NADP(+) contacts are provided by residues 200–206 (TGASGVQ) and 223–224 (RS).

This sequence belongs to the FAD-binding monooxygenase family. It depends on FAD as a cofactor.

It participates in secondary metabolite biosynthesis. FAD-binding monooxygenase; part of the cluster that mediates the biosynthesis of acurin A, a highly reduced polyketide coupled to a serine via a peptide bond. The activities of the highly reducing polyketide synthase acrA and the nonribosomal peptide synthetase acrB are collectively responsible for the synthesis of the acurin A core structure with a heptaketide backbone produced by acrA covalently fused to a L-serine by acrB. After the formation of the PK-NRP hybrid product, it is detached from acrB by reductive release to set up the formation of the lactam ring by aldol condensation. The hydrolyase acrC then catalyzes water loss to generate a double bond in the ring. This double bond is probably reduced, which is followed by three oxidations at C-22 to generate the carboxylic acid moiety, involving probably the FAD-binding monooxygenase acrE and the cytochrome P450 monooxygenases acrD and acrF. Finally, a last methylation step performed by the O-methyltransferase acrG leads to the production of acurin A. The protein is FAD-binding monooxygenase acrE of Aspergillus aculeatus (strain ATCC 16872 / CBS 172.66 / WB 5094).